Consider the following 314-residue polypeptide: Olfactory receptor 2Z1 (314 aa).

Residues 1–25 (MGDVNQSVASDFILVGLFSHSGSRQ) lie on the Extracellular side of the membrane. A glycan (N-linked (GlcNAc...) asparagine) is linked at asparagine 5. Residues 26–49 (LLFSLVAVMFVIGLLGNTVLLFLI) form a helical membrane-spanning segment. Topologically, residues 50-57 (RVDSRLHT) are cytoplasmic. A helical membrane pass occupies residues 58–79 (PMYFLLSQLSLFDIGCPMVTIP). Over 80 to 100 (KMASDFLRGEGATSYGGGAAQ) the chain is Extracellular. Residues 101 to 120 (IFFLTLMGVAEGVLLVLMSY) traverse the membrane as a helical segment. Residues 121–139 (DRYVAVCQPLQYPVLMRRQ) are Cytoplasmic-facing. The chain crosses the membrane as a helical span at residues 140-158 (VCLLMMGSSWVVGVLNASI). Over 159 to 195 (QTSITLHFPYCASRIVDHFFCEVPALLKLSCADTCAY) the chain is Extracellular. A helical membrane pass occupies residues 196 to 219 (EMALSTSGVLILMLPLSLIATSYG). The Cytoplasmic segment spans residues 220–236 (HVLQAVLSMRSEEARHK). Residues 237–259 (AVTTCSSHITVVGLFYGAAVFMY) form a helical membrane-spanning segment. Residues 260 to 272 (MVPCAYHSPQQDN) lie on the Extracellular side of the membrane. The helical transmembrane segment at 273–292 (VVSLFYSLVTPTLNPLIYSL) threads the bilayer. The Cytoplasmic segment spans residues 293 to 314 (RNPEVWMALVKVLSRAGLRQMC).

Belongs to the G-protein coupled receptor 1 family.

The protein localises to the cell membrane. Functionally, odorant receptor. In Homo sapiens (Human), this protein is Olfactory receptor 2Z1 (OR2Z1).